The sequence spans 256 residues: 1-(5-phosphoribosyl)-5-[(5-phosphoribosylamino)methylideneamino] imidazole-4-carboxamide isomerase (256 aa).

Asp8 functions as the Proton acceptor in the catalytic mechanism. The Proton donor role is filled by Asp129.

The protein belongs to the HisA/HisF family.

Its subcellular location is the cytoplasm. The enzyme catalyses 1-(5-phospho-beta-D-ribosyl)-5-[(5-phospho-beta-D-ribosylamino)methylideneamino]imidazole-4-carboxamide = 5-[(5-phospho-1-deoxy-D-ribulos-1-ylimino)methylamino]-1-(5-phospho-beta-D-ribosyl)imidazole-4-carboxamide. It participates in amino-acid biosynthesis; L-histidine biosynthesis; L-histidine from 5-phospho-alpha-D-ribose 1-diphosphate: step 4/9. The polypeptide is 1-(5-phosphoribosyl)-5-[(5-phosphoribosylamino)methylideneamino] imidazole-4-carboxamide isomerase (Syntrophobacter fumaroxidans (strain DSM 10017 / MPOB)).